The sequence spans 130 residues: Con-Ins G2 (130 aa).

Residues 1–24 (MTTSSYFLLVALGLLLYVRQSFST) form the signal peptide. Disulfide bonds link Cys-29/Cys-100, Cys-41/Cys-103, Cys-53/Cys-116, and Cys-102/Cys-107. Residue Pro-34 is modified to 4-hydroxyproline; partial. Residues 54-74 (EEEEARRGGTNDGGKKRRRAS) form a disordered region. The propeptide at 59–92 (RRGGTNDGGKKRRRASPLWKRRRFLSMLKARAKR) is c peptide. Residue Glu-111 is modified to 4-carboxyglutamate; partial.

The protein belongs to the insulin family. In terms of assembly, heterodimer of A and B chains; disulfide-linked. In terms of tissue distribution, expressed by the venom gland.

The protein localises to the secreted. Functionally, this venom insulin, from a fish-hunting cone snail, facilitates prey capture by rapidly inducing hypoglycemic shock. Intraperitoneal injection of this peptide into zebrafish lowers blood glucose with the same potency than human insulin. In vivo, when applied to water, this peptide reduces overall locomotor activity of zebrafish larvae, observed as a significant decrease in the percentage of time spent swimming and movement frequency. The chain is Con-Ins G2 from Conus geographus (Geography cone).